The chain runs to 205 residues: Ribosomal RNA small subunit methyltransferase G (205 aa).

S-adenosyl-L-methionine-binding positions include glycine 71, phenylalanine 76, isoleucine 120–glutamate 121, and arginine 134.

This sequence belongs to the methyltransferase superfamily. RNA methyltransferase RsmG family.

Its subcellular location is the cytoplasm. It catalyses the reaction guanosine(527) in 16S rRNA + S-adenosyl-L-methionine = N(7)-methylguanosine(527) in 16S rRNA + S-adenosyl-L-homocysteine. Its function is as follows. Specifically methylates the N7 position of guanine in position 527 of 16S rRNA. The protein is Ribosomal RNA small subunit methyltransferase G of Paramagnetospirillum magneticum (strain ATCC 700264 / AMB-1) (Magnetospirillum magneticum).